Reading from the N-terminus, the 451-residue chain is Alpha-galactosidase (451 aa).

Residue 5 to 71 (PKITFIGAGS…ASGKITCHTQ (67 aa)) coordinates NAD(+). Residue Asn151 participates in substrate binding. Cys173 provides a ligand contact to Mn(2+). His174 (proton donor) is an active-site residue. His203 is a Mn(2+) binding site. Arg287 lines the substrate pocket.

This sequence belongs to the glycosyl hydrolase 4 family. In terms of assembly, homodimer. NAD(+) is required as a cofactor. It depends on Mn(2+) as a cofactor.

The catalysed reaction is Hydrolysis of terminal, non-reducing alpha-D-galactose residues in alpha-D-galactosides, including galactose oligosaccharides, galactomannans and galactolipids.. In Escherichia coli (strain K12), this protein is Alpha-galactosidase (melA).